Here is a 716-residue protein sequence, read N- to C-terminus: Tensin-4 (716 aa).

A signal peptide spans 1–17 (MSQVMSSPLLAGGPAVG). 4 disordered regions span residues 119 to 274 (LPPG…VSML), 301 to 322 (QSSS…NLGP), 334 to 366 (VPSN…PSIT), and 379 to 436 (GFPE…RDMQ). Positions 138–150 (KKKEEPEALDIKY) are enriched in basic and acidic residues. Residues 197–206 (SSESLIFSGS) are compositionally biased toward polar residues. A compositionally biased stretch (pro residues) spans 214-228 (PAPPSAVPSSHPPTS). Position 248 is a phosphoserine (Ser-248). The segment covering 265 to 274 (PQLSSRVSML) has biased composition (polar residues). Polar residues predominate over residues 402–419 (ATSSSMPCPATRSHSQTL). Residues 449 to 556 (WFKPSISREQ…ALPCKLVIPQ (108 aa)) enclose the SH2 domain. The region spanning 583-704 (CHALYLSSVS…TLQPASQVIR (122 aa)) is the PTB domain.

The protein belongs to the PTEN phosphatase protein family. In terms of assembly, interacts (via SH2 domain) with Rho GTPase-activating protein DLC1 (via C-terminus); the interaction is independent of DLC1 tyrosine phosphorylation. Interacts with integrin ITGB1; the interaction displaces tensin TNS3 from the ITGB1 cytoplasmic tail and promotes ITGB1 stability. Interacts (via SH2 domain) with E3 ubiquitin-protein ligase CBL (phosphorylated on 'Tyr-782'); the interaction is enhanced in the presence of EGF and reduces interaction of CBL with EGFR. Interacts (via SH2 domain) with receptor tyrosine kinase MET (when phosphorylated); the interaction increases MET protein stability.

The protein resides in the cell junction. Its subcellular location is the focal adhesion. It is found in the cytoplasm. It localises to the cytoskeleton. Promotes EGF-induced cell migration by displacing tensin TNS3 from the cytoplasmic tail of integrin ITGB1 which results in dissociation of TNS3 from focal adhesions, disassembly of actin stress fibers and initiation of cell migration. Suppresses ligand-induced degradation of EGFR by reducing EGFR ubiquitination in the presence of EGF. Increases MET protein stability by inhibiting MET endocytosis and subsequent lysosomal degradation which leads to increased cell survival, proliferation and migration. This is Tensin-4 (TNS4) from Bos taurus (Bovine).